A 214-amino-acid chain; its full sequence is Adenylate kinase (214 aa).

10–15 serves as a coordination point for ATP; it reads GAGKGT. The tract at residues 30–59 is NMP; it reads STGDMLRAAVKSGSELGKQAKDIMDAGKLV. Residues T31, R36, 57 to 59, 85 to 88, and Q92 each bind AMP; these read KLV and GFPR. Positions 122–159 are LID; it reads GRRVHAPSGRVYHVKFNPPKVEGKDDVTGEELTTRKDD. ATP is bound by residues R123 and 132–133; that span reads VY. Positions 156 and 167 each coordinate AMP. Position 192 is an N6-acetyllysine (K192). Residue K200 participates in ATP binding.

The protein belongs to the adenylate kinase family. Monomer.

Its subcellular location is the cytoplasm. It catalyses the reaction AMP + ATP = 2 ADP. Its pathway is purine metabolism; AMP biosynthesis via salvage pathway; AMP from ADP: step 1/1. Its function is as follows. Catalyzes the reversible transfer of the terminal phosphate group between ATP and AMP. Plays an important role in cellular energy homeostasis and in adenine nucleotide metabolism. The protein is Adenylate kinase of Escherichia coli O8 (strain IAI1).